Reading from the N-terminus, the 142-residue chain is Hemoglobin subunit alpha (142 aa).

The residue at position 1 (S1) is an N-acetylserine. The Globin domain maps to 1 to 142; sequence SLSDKDKAAV…VALALAERYR (142 aa). H59 is an O2 binding site. H88 is a binding site for heme b.

The protein belongs to the globin family. As to quaternary structure, hb1 is a heterotetramer of two alpha chains and two beta-1 chains, while Hb2 is a heterotetramer of two alpha chains and two beta-2 chains. Red blood cells.

Functionally, involved in oxygen transport from gills to the various peripheral tissues. This chain is Hemoglobin subunit alpha (hba), found in Cygnodraco mawsoni (Antarctic dragonfish).